A 403-amino-acid polypeptide reads, in one-letter code: JmjC domain-containing histone demethylation protein 1 (403 aa).

A JmjC domain is found at 141–328 (WSLREWCNYF…QQLKIVDVEK (188 aa)). Threonine 221 is a binding site for substrate. Positions 224 and 226 each coordinate Fe cation. Residue lysine 241 participates in substrate binding. Residue histidine 296 coordinates Fe cation.

The protein belongs to the JHDM1 histone demethylase family. Fe(2+) serves as cofactor.

The protein resides in the nucleus. It catalyses the reaction N(6),N(6)-dimethyl-L-lysyl(36)-[histone H3] + 2 2-oxoglutarate + 2 O2 = L-lysyl(36)-[histone H3] + 2 formaldehyde + 2 succinate + 2 CO2. Its function is as follows. Histone demethylase that specifically demethylates 'Lys-36' of histone H3, thereby playing a central role in histone code. The polypeptide is JmjC domain-containing histone demethylation protein 1 (JHD1) (Candida glabrata (strain ATCC 2001 / BCRC 20586 / JCM 3761 / NBRC 0622 / NRRL Y-65 / CBS 138) (Yeast)).